A 207-amino-acid polypeptide reads, in one-letter code: uncharacterized protein (207 aa).

A signal peptide spans 1–19 (MRHGLLALICWLCCVVAHS).

To P.aeruginosa PA4490 and T.maritima TM0986.

This is an uncharacterized protein from Escherichia coli (strain K12).